Here is a 578-residue protein sequence, read N- to C-terminus: A-type ATP synthase subunit A (578 aa).

228-235 (GPFGSGKT) provides a ligand contact to ATP.

Belongs to the ATPase alpha/beta chains family. In terms of assembly, has multiple subunits with at least A(3), B(3), C, D, E, F, H, I and proteolipid K(x).

The protein resides in the cell membrane. It carries out the reaction ATP + H2O + 4 H(+)(in) = ADP + phosphate + 5 H(+)(out). Functionally, produces ATP from ADP in the presence of a proton gradient across the membrane. The archaeal alpha chain is a catalytic subunit. In terms of biological role, component of the A-type ATP synthase that produces ATP from ADP in the presence of a proton gradient across the membrane. The A chain is the catalytic subunit. The sequence is that of A-type ATP synthase subunit A from Methanosarcina barkeri.